Here is a 344-residue protein sequence, read N- to C-terminus: UDP-glucose 4-epimerase (344 aa).

NAD(+) contacts are provided by residues 15–17, 36–40, 63–64, Phe85, and Lys89; these read GYI, DNLSN, and DI. Position 129–131 (129–131) interacts with substrate; that stretch reads SAT. Tyr153 serves as the catalytic Proton acceptor. 2 residues coordinate NAD(+): Lys157 and Tyr181. Substrate contacts are provided by residues 181–183, 202–204, 220–222, Arg235, and 297–300; these read YFN, NNL, SIF, and RKGD.

This sequence belongs to the NAD(P)-dependent epimerase/dehydratase family. As to quaternary structure, homodimer. NAD(+) is required as a cofactor.

It carries out the reaction UDP-alpha-D-glucose = UDP-alpha-D-galactose. The enzyme catalyses UDP-N-acetyl-alpha-D-glucosamine = UDP-N-acetyl-alpha-D-galactosamine. It functions in the pathway carbohydrate metabolism; galactose metabolism. In terms of biological role, catalyzes two distinct but analogous reactions: the reversible epimerization of UDP-glucose to UDP-galactose and the reversible epimerization of UDP-N-acetylglucosamine to UDP-N-acetylgalactosamine. The reaction with UDP-Gal plays a critical role in the Leloir pathway of galactose catabolism in which galactose is converted to the glycolytic intermediate glucose 6-phosphate. It contributes to the catabolism of dietary galactose and enables the endogenous biosynthesis of both UDP-Gal and UDP-GalNAc when exogenous sources are limited. Both UDP-sugar interconversions are important in the synthesis of glycoproteins and glycolipids. In Dictyostelium discoideum (Social amoeba), this protein is UDP-glucose 4-epimerase (galE).